The primary structure comprises 218 residues: DNA ADP-ribosyl transferase (218 aa).

The DarT domain maps to 14-217; it reads ALIWRIVHRD…SVHTRSGWYF (204 aa). NAD(+) is bound by residues 18–20 and arginine 57; that span reads RIV. The interval 41–59 is NAD(+)-binding element; the sequence is QAENWINIGNPELIGKRAG. Arginine 57 acts as the Proton acceptor in catalysis. The tract at residues 123 to 170 is ADP-ribosylating turn-turn loop; the sequence is TDSHAYYNWTNYYTSLNSLDQIDWPILQARDFRRDPDDPAKFERYQAE. Residue glutamate 170 is part of the active site.

Belongs to the DarT ADP-ribosyltransferase family. In terms of assembly, interacts with cognate antitoxin DarG (via C-terminus); this heterodimeric complex neutralizes the toxic effect of DarT by preventing ssDNA binding to DarT and consequently inactivating the toxin by direct protein-protein interactions.

It catalyses the reaction a thymidine in DNA + NAD(+) = an N-(ADP-alpha-D-ribosyl)-thymidine in DNA + nicotinamide + H(+). Functionally, toxic component of the hybrid type II/IV toxin-antitoxin (TA) system DarTG, which plays a crucial role in controlling bacterial growth and bacteriophage infection. ADP-ribosylates ssDNA in the sequence TTT/TCT. In case of phage infection, DarT toxin ADP-ribosylates DNA, which inhibits both viral DNA and RNA synthesis and leads to abortive infection. Its toxic effect is neutralized by cognate antitoxin DarG. May target ssDNA loops during DNA replication, probably modifies thymidine. Wild-type protein cannot be expressed at low levels in the absence of its cognate antitoxin, but a mutant protein (G49D) can be expressed, which slows growth, rapidly inhibits DNA replication, and induces RecA expression and the SOS response. The slow growth phenotype can be suppressed by cognate antitoxin DarG. Has no activity on dsDNA in vitro. In vivo ADP-ribosylates genomic DNA (gDNA). Genetic data strongly suggests ADP-ribosylation by DarT probably generates ssDNA gaps that are repaired by the RecFOR-mediated homologous recombination pathway (RuvAB, RecG) and resolved by RuvC. In some cases these gaps probably migrate into dsDNA, where they are resolved by nucleotide excision repair (NER) detected by UvrAB, excised by UvrC, removed by UvrD, and repaired by Pol I and ligase. Other pathways may also be involved in ADP-ribosylation removal from DNA. This Escherichia coli O127:H6 (strain E2348/69 / EPEC) protein is DNA ADP-ribosyl transferase.